Consider the following 48-residue polypeptide: ASCKCDDDGPDVRSATFTGTVDFAYCNAGWEKCLAVYTPVASCCRKKK.

Disulfide bonds link C3–C43, C5–C33, and C26–C44.

This sequence belongs to the sea anemone sodium channel inhibitory toxin family. Type II subfamily.

The protein resides in the secreted. The protein localises to the nematocyst. Binds to site 3 of voltage-gated sodium channels and inhibits the inactivation process. The sequence is that of Delta-stichotoxin-Hcr1e from Radianthus crispa (Leathery sea anemone).